A 173-amino-acid polypeptide reads, in one-letter code: Transmembrane protein 240 (173 aa).

2 consecutive transmembrane segments (helical) span residues 5-25 (ANTM…ACLM) and 90-110 (LMLG…MDGV). The residue at position 169 (Ser169) is a Phosphoserine.

It is found in the synapse. The protein localises to the cell membrane. This is Transmembrane protein 240 (Tmem240) from Mus musculus (Mouse).